The primary structure comprises 125 residues: Small ribosomal subunit protein uS12 (125 aa).

Residues 1-28 (MPTINQLVRKGREKVKKKSKAPALEGNP) form a disordered region. The segment covering 9–20 (RKGREKVKKKSK) has biased composition (basic residues). D89 bears the 3-methylthioaspartic acid mark. The disordered stretch occupies residues 104–125 (AAGVKDRKQSRSKYGTKRPKEK). Residues 113–125 (SRSKYGTKRPKEK) show a composition bias toward basic residues.

Belongs to the universal ribosomal protein uS12 family. In terms of assembly, part of the 30S ribosomal subunit. Contacts proteins S8 and S17. May interact with IF1 in the 30S initiation complex.

Its function is as follows. With S4 and S5 plays an important role in translational accuracy. Functionally, interacts with and stabilizes bases of the 16S rRNA that are involved in tRNA selection in the A site and with the mRNA backbone. Located at the interface of the 30S and 50S subunits, it traverses the body of the 30S subunit contacting proteins on the other side and probably holding the rRNA structure together. The combined cluster of proteins S8, S12 and S17 appears to hold together the shoulder and platform of the 30S subunit. This is Small ribosomal subunit protein uS12 from Persephonella marina (strain DSM 14350 / EX-H1).